The following is a 227-amino-acid chain: 7-cyano-7-deazaguanine synthase (227 aa).

9–19 serves as a coordination point for ATP; that stretch reads LSGGLDSATVL. Residues C189, C199, C202, and C205 each contribute to the Zn(2+) site.

The protein belongs to the QueC family. Zn(2+) is required as a cofactor.

It carries out the reaction 7-carboxy-7-deazaguanine + NH4(+) + ATP = 7-cyano-7-deazaguanine + ADP + phosphate + H2O + H(+). Its pathway is purine metabolism; 7-cyano-7-deazaguanine biosynthesis. Catalyzes the ATP-dependent conversion of 7-carboxy-7-deazaguanine (CDG) to 7-cyano-7-deazaguanine (preQ(0)). In Cupriavidus metallidurans (strain ATCC 43123 / DSM 2839 / NBRC 102507 / CH34) (Ralstonia metallidurans), this protein is 7-cyano-7-deazaguanine synthase.